We begin with the raw amino-acid sequence, 480 residues long: UDP-N-acetylmuramoyl-L-alanyl-D-glutamate--2,6-diaminopimelate ligase (480 aa).

Ser21 lines the UDP-N-acetyl-alpha-D-muramoyl-L-alanyl-D-glutamate pocket. 98 to 104 is a binding site for ATP; sequence GTNGKSS. Residues 144–145, Ser171, Gln177, and Arg179 each bind UDP-N-acetyl-alpha-D-muramoyl-L-alanyl-D-glutamate; that span reads TT. N6-carboxylysine is present on Lys211. Residues Arg372, 396-399, Gly446, and Glu450 contribute to the meso-2,6-diaminopimelate site; that span reads DNPR. Positions 396–399 match the Meso-diaminopimelate recognition motif motif; that stretch reads DNPR.

This sequence belongs to the MurCDEF family. MurE subfamily. Requires Mg(2+) as cofactor. Post-translationally, carboxylation is probably crucial for Mg(2+) binding and, consequently, for the gamma-phosphate positioning of ATP.

It is found in the cytoplasm. It catalyses the reaction UDP-N-acetyl-alpha-D-muramoyl-L-alanyl-D-glutamate + meso-2,6-diaminopimelate + ATP = UDP-N-acetyl-alpha-D-muramoyl-L-alanyl-gamma-D-glutamyl-meso-2,6-diaminopimelate + ADP + phosphate + H(+). The protein operates within cell wall biogenesis; peptidoglycan biosynthesis. Catalyzes the addition of meso-diaminopimelic acid to the nucleotide precursor UDP-N-acetylmuramoyl-L-alanyl-D-glutamate (UMAG) in the biosynthesis of bacterial cell-wall peptidoglycan. The protein is UDP-N-acetylmuramoyl-L-alanyl-D-glutamate--2,6-diaminopimelate ligase of Rickettsia prowazekii (strain Madrid E).